The sequence spans 140 residues: ATP synthase epsilon chain (140 aa).

The protein belongs to the ATPase epsilon chain family. As to quaternary structure, F-type ATPases have 2 components, CF(1) - the catalytic core - and CF(0) - the membrane proton channel. CF(1) has five subunits: alpha(3), beta(3), gamma(1), delta(1), epsilon(1). CF(0) has three main subunits: a, b and c.

It is found in the cell inner membrane. In terms of biological role, produces ATP from ADP in the presence of a proton gradient across the membrane. In Nitrosomonas europaea (strain ATCC 19718 / CIP 103999 / KCTC 2705 / NBRC 14298), this protein is ATP synthase epsilon chain.